The sequence spans 172 residues: Adenine phosphoribosyltransferase (172 aa).

The protein belongs to the purine/pyrimidine phosphoribosyltransferase family. In terms of assembly, homodimer.

It is found in the cytoplasm. It catalyses the reaction AMP + diphosphate = 5-phospho-alpha-D-ribose 1-diphosphate + adenine. It functions in the pathway purine metabolism; AMP biosynthesis via salvage pathway; AMP from adenine: step 1/1. Catalyzes a salvage reaction resulting in the formation of AMP, that is energically less costly than de novo synthesis. The chain is Adenine phosphoribosyltransferase from Clostridium perfringens (strain ATCC 13124 / DSM 756 / JCM 1290 / NCIMB 6125 / NCTC 8237 / Type A).